Reading from the N-terminus, the 247-residue chain is RNA-free ribonuclease P (247 aa).

Positions Ser-223–Ile-247 are disordered.

This sequence belongs to the HARP family.

The catalysed reaction is Endonucleolytic cleavage of RNA, removing 5'-extranucleotides from tRNA precursor.. Functionally, RNA-free RNase P that catalyzes the removal of the 5'-leader sequence from pre-tRNA to produce the mature 5'-terminus. The polypeptide is RNA-free ribonuclease P (Methanosarcina acetivorans (strain ATCC 35395 / DSM 2834 / JCM 12185 / C2A)).